The primary structure comprises 597 residues: Exochitinase 1 (597 aa).

A signal peptide (or 32) is located at residues 1-29 (MDRFRPLAVLIAAALTLSGTTALSSAARA). One can recognise a Fibronectin type-III domain in the interval 172–253 (PPTGLRTGSV…ATVTATTAPG (82 aa)). Residues 264–597 (HALVGYLHAS…FQRTFDGYFG (334 aa)) enclose the GH18 domain. Catalysis depends on Glu384, which acts as the Proton donor.

Belongs to the glycosyl hydrolase 18 family. Chitinase class II subfamily. In terms of processing, the N-terminus is blocked.

The enzyme catalyses Random endo-hydrolysis of N-acetyl-beta-D-glucosaminide (1-&gt;4)-beta-linkages in chitin and chitodextrins.. Inhibited by the pseudosugar allosamidin A. In terms of biological role, exochitinase that generates exclusively chitobiose from chitotetraose, chitohexaose, and colloidal high-molecular mass chitin. In Streptomyces olivaceoviridis (Streptomyces corchorusii), this protein is Exochitinase 1 (chi01).